Here is a 1138-residue protein sequence, read N- to C-terminus: Envelopment polyprotein (1138 aa).

Residues 1–18 (MEGWYLVVLGVCYTLTLA) form the signal peptide. Over 19 to 487 (MPKTIYELKM…CVPGLHGWAT (469 aa)) the chain is Lumenal. 11 disulfide bridges follow: cysteine 30–cysteine 155, cysteine 64–cysteine 161, cysteine 113–cysteine 132, cysteine 137–cysteine 142, cysteine 179–cysteine 189, cysteine 214–cysteine 250, cysteine 239–cysteine 354, cysteine 379–cysteine 438, cysteine 383–cysteine 392, cysteine 408–cysteine 427, and cysteine 455–cysteine 478. The N-linked (GlcNAc...) asparagine; by host glycan is linked to asparagine 138. Residue asparagine 350 is glycosylated (N-linked (GlcNAc...) asparagine; by host). Residue asparagine 402 is glycosylated (N-linked (GlcNAc...) asparagine; by host). A helical membrane pass occupies residues 488–508 (VMLLSTFCFGWVLIPAVTLII). Residues 509–630 (LKCLRVLTFS…LGVFRYKSRC (122 aa)) lie on the Cytoplasmic side of the membrane. Positions 519 to 536 (CSHYTNESKFKFILEKVK) are binding to the ribonucleoprotein. CCHC-type zinc fingers lie at residues 548–568 (CDVC…RQSC) and 573–594 (CPYC…YSIC). Binding to the ribonucleoprotein stretches follow at residues 591 to 608 (YSIC…KKSL), 595 to 606 (KLTGRFQEALKK), and 614 to 628 (KKGC…RYKS). The interval 610 to 637 (KPEVKKGCYRTLGVFRYKSRCYVGLVWC) is interaction with host TRAF3. Residues 614–637 (KKGCYRTLGVFRYKSRCYVGLVWC) form the ITAM domain. Residues tyrosine 618 and tyrosine 631 each carry the phosphotyrosine modification. A YxxL motif is present at residues 618-621 (YRTL). Residues 631-651 (YVGLVWCLLLTCEIVIWAASA) traverse the membrane as a helical segment. The Lumenal segment spans residues 652-1107 (ETPLMESGWS…EWLLGILNGN (456 aa)). Intrachain disulfides connect cysteine 738-cysteine 773, cysteine 742-cysteine 780, cysteine 754-cysteine 887, cysteine 768-cysteine 898, cysteine 783-cysteine 906, cysteine 809-cysteine 818, cysteine 826-cysteine 835, and cysteine 866-cysteine 870. The segment at 760–780 (YQYETGWGCNPGDCPGVGTGC) is fusion loop. N-linked (GlcNAc...) asparagine; by host glycosylation is present at asparagine 930. Intrachain disulfides connect cysteine 972/cysteine 1002, cysteine 995/cysteine 1047, cysteine 1012/cysteine 1017, cysteine 1048/cysteine 1053, and cysteine 1087/cysteine 1091. The helical transmembrane segment at 1108-1128 (WIVVVVLVVILILSIIMFSVL) threads the bilayer. The tract at residues 1124-1138 (MFSVLCPRRGHKKTV) is binding to the ribonucleoprotein. The Cytoplasmic portion of the chain corresponds to 1129–1138 (CPRRGHKKTV).

It belongs to the hantavirus envelope glycoprotein family. Homodimer. Homotetramer; forms heterotetrameric Gn-Gc spikes in the pre-fusion conformation. Interacts (via C-terminus) with the nucleoprotein. Interacts with host TUFM; this interaction contributes to the virus-induced degradation of mitochondria by autophagy, which leads to degradation of host MAVS and inhibition of type I interferon (IFN) responses. Interacts with host MAP1LC3B; this interaction contributes to the virus-induced degradation of mitochondria by autophagy, which leads to degradation of host MAVS and inhibition of type I interferon (IFN) responses. Interacts (via C-terminus) with host TRAF3; this interaction inhibits the formation of TRAF3-TBK1 complexes. As to quaternary structure, homodimer. Homotetramer; forms heterotetrameric Gn-Gc spikes in the pre-fusion conformation. Homotrimer; forms homotrimer in the post-fusion conformation at acidic pH. Interacts (via C-terminus) with the nucleoprotein. In terms of processing, envelope polyprotein precursor is quickly cleaved in vivo just after synthesis, presumably by host signal peptidase.

It localises to the virion membrane. It is found in the host cell surface. Its subcellular location is the host Golgi apparatus membrane. The protein localises to the host endoplasmic reticulum membrane. The protein resides in the host mitochondrion. Functionally, forms homotetramers with glycoprotein C at the surface of the virion. Attaches the virion to host cell receptors including integrin ITGAV/ITGB3. This attachment induces virion internalization possibly through clathrin-dependent endocytosis and dynamin-independent macropinocytosis. Mediates the assembly and budding of infectious virus particles through its interaction with the nucleocapsid protein and the viral genome. May dysregulate normal immune and endothelial cell responses through an ITAM motif. Translocates to mitochondria, binds to host TUFM and recruits MAP1LC3B. These interactions induce mitochondrial autophagy and therefore destruction of host MAVS leading to inhibition of type I interferon (IFN) responses. Concomitant breakdown of glycoprotein N is apparently prevented by the nucleoprotein that may inhibit Gn-stimulated autophagosome-lysosome fusion. Interacts with the viral genomic RNA. Inhibits the host RIG-I/TBK1 pathway by disrupting the formation of TBK1-TRAF3 complexes and downstream signaling responses required for IFN-beta transcription. Its function is as follows. Forms homotetramers with glycoprotein N at the surface of the virion. Attaches the virion to host cell receptors including integrin ITGAV/ITGB3. This attachment induces virion internalization predominantly through clathrin-dependent endocytosis. Class II fusion protein that promotes fusion of viral membrane with host endosomal membrane after endocytosis of the virion. The sequence is that of Envelopment polyprotein (GP) from Abrothrix longipilis (Long-haired grass mouse).